A 565-amino-acid chain; its full sequence is Periplasmic trehalase (565 aa).

An N-terminal signal peptide occupies residues 1–30 (MKSPAPSRPQKMALIPACIFLCFAALSVQA). Substrate is bound by residues R152, 159–160 (WD), N196, 205–207 (RSQ), 277–279 (RPE), and G310. Catalysis depends on proton donor/acceptor residues D312 and E496. Residue E511 participates in substrate binding. Residues 538–565 (PCDNVPATRPTVKSATTQPSTKEAQPTP) are disordered. A compositionally biased stretch (polar residues) spans 548–565 (TVKSATTQPSTKEAQPTP).

It belongs to the glycosyl hydrolase 37 family. In terms of assembly, monomer.

It is found in the periplasm. It catalyses the reaction alpha,alpha-trehalose + H2O = alpha-D-glucose + beta-D-glucose. Provides the cells with the ability to utilize trehalose at high osmolarity by splitting it into glucose molecules that can subsequently be taken up by the phosphotransferase-mediated uptake system. This chain is Periplasmic trehalase, found in Escherichia coli O8 (strain IAI1).